The chain runs to 291 residues: Pantothenate synthetase (291 aa).

30–37 serves as a coordination point for ATP; it reads MGNLHEGH. His-37 (proton donor) is an active-site residue. Gln-61 is a (R)-pantoate binding site. Gln-61 serves as a coordination point for beta-alanine. 149 to 152 lines the ATP pocket; the sequence is GEKD. Gln-155 contacts (R)-pantoate. Residues Val-178 and 186–189 each bind ATP; that span reads MSSR.

The protein belongs to the pantothenate synthetase family. As to quaternary structure, homodimer.

It localises to the cytoplasm. The enzyme catalyses (R)-pantoate + beta-alanine + ATP = (R)-pantothenate + AMP + diphosphate + H(+). It functions in the pathway cofactor biosynthesis; (R)-pantothenate biosynthesis; (R)-pantothenate from (R)-pantoate and beta-alanine: step 1/1. In terms of biological role, catalyzes the condensation of pantoate with beta-alanine in an ATP-dependent reaction via a pantoyl-adenylate intermediate. In Aliivibrio fischeri (strain ATCC 700601 / ES114) (Vibrio fischeri), this protein is Pantothenate synthetase.